The chain runs to 329 residues: Malate dehydrogenase (329 aa).

12–18 (GAAGQIG) lines the NAD(+) pocket. Substrate contacts are provided by Arg93 and Arg99. Residues Asn106, Gln113, and 130–132 (VGN) each bind NAD(+). Positions 132 and 163 each coordinate substrate. The active-site Proton acceptor is the His188.

This sequence belongs to the LDH/MDH superfamily. MDH type 2 family.

It catalyses the reaction (S)-malate + NAD(+) = oxaloacetate + NADH + H(+). Strongly inhibited by Hg(2+) and Zn(2+). Activated by Na(+), NH(4)(+), Ca(2+), Cu(2+) and Mg(2+). Functionally, catalyzes the reversible oxidation of malate to oxaloacetate. Exhibits remarkably higher catalytic efficiency for oxaloacetate reduction than for malate oxidation in vitro. Highly specific for NAD(H). Can also use NADPH for oxaloacetate reduction, but catalytic efficiency is 97-fold higher with NADH. No activity detected with NADP(+) and malate. The polypeptide is Malate dehydrogenase (Streptomyces avermitilis (strain ATCC 31267 / DSM 46492 / JCM 5070 / NBRC 14893 / NCIMB 12804 / NRRL 8165 / MA-4680)).